The sequence spans 502 residues: Protein DETOXIFICATION 49 (502 aa).

12 helical membrane-spanning segments follow: residues 41 to 61 (LPLILTGLLLYSRSMISMLFL), 75 to 95 (LALGFANITGYSLLSGLSIGM), 123 to 143 (LLCSLPISILWLNIKKILLFF), 153 to 173 (AEIFILFSLPDLILQSFLHPI), 190 to 210 (AFFAVLLHIPINYLLVSSLGL), 216 to 236 (ALGAIWTNVNLLGFLIIYIVF), 267 to 287 (VSVCLEWWWYEIMILLCGLLL), 293 to 313 (VASMGILIQTTALIYIFPSSL), 338 to 358 (RTGLSLSLGLGLLAMFFALMV), 372 to 392 (IVKLTSMVLPIIGLCELGNCP), 414 to 434 (LCCFYFVGMPVAVWLSFFSGF), and 439 to 459 (LWLGLFAAQGSCLISMLVVLA).

This sequence belongs to the multi antimicrobial extrusion (MATE) (TC 2.A.66.1) family.

The protein resides in the membrane. The sequence is that of Protein DETOXIFICATION 49 from Arabidopsis thaliana (Mouse-ear cress).